Here is a 166-residue protein sequence, read N- to C-terminus: Small ribosomal subunit protein uS5 (166 aa).

An S5 DRBM domain is found at 11–74; it reads FLEKLIAVNR…EKARRNMVDV (64 aa).

The protein belongs to the universal ribosomal protein uS5 family. In terms of assembly, part of the 30S ribosomal subunit. Contacts proteins S4 and S8.

With S4 and S12 plays an important role in translational accuracy. Its function is as follows. Located at the back of the 30S subunit body where it stabilizes the conformation of the head with respect to the body. The chain is Small ribosomal subunit protein uS5 from Alteromonas mediterranea (strain DSM 17117 / CIP 110805 / LMG 28347 / Deep ecotype).